Here is a 350-residue protein sequence, read N- to C-terminus: Phenylalanine--tRNA ligase alpha subunit (350 aa).

Glu-262 contributes to the Mg(2+) binding site.

The protein belongs to the class-II aminoacyl-tRNA synthetase family. Phe-tRNA synthetase alpha subunit type 1 subfamily. As to quaternary structure, tetramer of two alpha and two beta subunits. The cofactor is Mg(2+).

The protein localises to the cytoplasm. The catalysed reaction is tRNA(Phe) + L-phenylalanine + ATP = L-phenylalanyl-tRNA(Phe) + AMP + diphosphate + H(+). The polypeptide is Phenylalanine--tRNA ligase alpha subunit (pheS) (Thermus thermophilus (strain ATCC 27634 / DSM 579 / HB8)).